The primary structure comprises 302 residues: Ubiquitin thioesterase OTU1 (302 aa).

Positions 5–83 (RCKARSGTQP…IVEEDTSKPS (79 aa)) are UBX-like. The OTU domain maps to 103–228 (LARRVVPADN…GIHYDPLERK (126 aa)). The cys-loop stretch occupies residues 108–114 (VPADNSC). D111 is an active-site residue. The Nucleophile role is filled by C114. Positions 167–177 (IRREETWGGAI) are variable-loop. The his-loop stretch occupies residues 217–221 (YDGIH). I220 contacts substrate. H221 is a catalytic residue. An S2 site region spans residues 245–250 (DVVLAQ). The C2H2-type zinc finger occupies 272-296 (LRCMVCQKGLTGQVEAREHAKETGH). The active site involves H296.

It localises to the cytoplasm. It carries out the reaction Thiol-dependent hydrolysis of ester, thioester, amide, peptide and isopeptide bonds formed by the C-terminal Gly of ubiquitin (a 76-residue protein attached to proteins as an intracellular targeting signal).. Its function is as follows. Hydrolase that can remove conjugated ubiquitin from proteins and participates in endoplasmic reticulum-associated degradation (ERAD) for misfolded lumenal proteins. May act by triming the ubiquitin chain on the associated substrate to facilitate their threading through the VCP/p97 pore. Ubiquitin moieties on substrates may present a steric impediment to the threading process when the substrate is transferred to the VCP pore and threaded through VCP's axial channel. Mediates deubiquitination of 'Lys-27'-, 'Lys-29'- and 'Lys-33'-linked polyubiquitin chains. Also able to hydrolyze 'Lys-11'-linked ubiquitin chains. Cleaves both polyubiquitin and di-ubiquitin. This chain is Ubiquitin thioesterase OTU1 (YOD1), found in Gallus gallus (Chicken).